The chain runs to 854 residues: MDEAAAAEAVQLIDGEGEFAADSAERFMAAAGVAGCGLSYAVVSIMGPQSSGKSTLLNQLFGTNFREMDAFRGRSQTTKGIWIARCVGVEPCTVVMDLEGTDGRERGEDDTAFEKQSSLFALAISDIVLINMWCHDIGREQAANKPLLKTVFQVMMRLFSPRKTTLLFVIRDKTRTPLEHLEPVLREDIQKIWNSVAKPEAHKDTPISEFFNVQVTALPSFEEKEEQFREQVQQLRQRFSNSIAPGGLAGDRRGVVPASGFLFSSQQIWKVIRENKDLDLPAHKVMVATVRCDEIAHEKFSCLTSDAEWMELESDVQSGPVPGFGKKLGYIVDVHMQEYDKEAIYFDEAVRTAKRQLLKSRVLNLVQPAFQKMLAHLRTRALEKYKTELNLTLESGKGFAAAVRDTTESNLNEFDQGCADAVIEQADWDYSKILEKVRRDVEDHTLSIREGKLSELTNHAKEKLRKALVEPVESLFDAAGPSTWASIRNLFKRETEAILPEFQKNLAGFEMESATSEGMVSKLRDYARSIVENKAKEEAGKVLIHMKERFTTVFSHDKDSIPRVWTGKEDVRAIAKDARSAALKLLSVLAAIRWDEKPDKIEKILTSTLLDGSVTPKSKGASASSDPLASTTWEEVSPKYTLITPSQCKSLWKQFKAETEFAITQAVSTQQAHKRGNGRLPPPWAMVAIAVLGFNEIMTLLRNPIYLFLLFVGYLLVKALAVQLDINREFQNGVVPGIISVTAKLIPTLQNILNKVATEQQQQQGHHQDAAAEAPQQQQQPQPQPPPLLLSPRSPMSELRRPLHMPFSPVRKAVSPSPSSSSSTVTSPRNAGEDQKPRQMVQPDNESNNAYSIV.

Residues 1 to 680 (MDEAAAAEAV…QAHKRGNGRL (680 aa)) are Cytoplasmic-facing. Residues 37 to 252 (GLSYAVVSIM…IAPGGLAGDR (216 aa)) form the GB1/RHD3-type G domain. 47–54 (GPQSSGKS) contacts GTP. A coiled-coil region spans residues 217–242 (ALPSFEEKEEQFREQVQQLRQRFSNS). Residues 681–701 (PPPWAMVAIAVLGFNEIMTLL) form a helical membrane-spanning segment. Over 702–704 (RNP) the chain is Lumenal. The helical transmembrane segment at 705–725 (IYLFLLFVGYLLVKALAVQLD) threads the bilayer. Over 726–854 (INREFQNGVV…NESNNAYSIV (129 aa)) the chain is Cytoplasmic. 2 stretches are compositionally biased toward low complexity: residues 758–781 (TEQQ…QQQP) and 814–828 (VSPS…VTSP). Residues 758 to 854 (TEQQQQQGHH…NESNNAYSIV (97 aa)) are disordered. Residues 842 to 854 (QPDNESNNAYSIV) are compositionally biased toward polar residues.

Belongs to the TRAFAC class dynamin-like GTPase superfamily. GB1/RHD3 GTPase family. RHD3 subfamily.

Its subcellular location is the endoplasmic reticulum membrane. In terms of biological role, probable GTP-binding protein that may be involved in cell development. In Oryza sativa subsp. japonica (Rice), this protein is Protein ROOT HAIR DEFECTIVE 3 homolog 1.